A 207-amino-acid chain; its full sequence is Large ribosomal subunit protein uL4 (207 aa).

The interval 49–78 (HAVKNRSAVRGGGRKPWRQKGTGRARQGSI) is disordered. The span at 60–71 (GGRKPWRQKGTG) shows a compositional bias: basic residues.

Belongs to the universal ribosomal protein uL4 family. Part of the 50S ribosomal subunit.

One of the primary rRNA binding proteins, this protein initially binds near the 5'-end of the 23S rRNA. It is important during the early stages of 50S assembly. It makes multiple contacts with different domains of the 23S rRNA in the assembled 50S subunit and ribosome. In terms of biological role, forms part of the polypeptide exit tunnel. In Latilactobacillus sakei subsp. sakei (strain 23K) (Lactobacillus sakei subsp. sakei), this protein is Large ribosomal subunit protein uL4.